We begin with the raw amino-acid sequence, 167 residues long: Phosphopantetheine adenylyltransferase (167 aa).

Residue Ser-11 coordinates substrate. ATP contacts are provided by residues 11 to 12 (SF) and His-19. Substrate-binding residues include Lys-43, Thr-76, and Arg-90. ATP is bound by residues 91 to 93 (GIR), Glu-101, and 126 to 132 (YDALSST).

Belongs to the bacterial CoaD family. Homohexamer. Mg(2+) serves as cofactor.

The protein localises to the cytoplasm. It catalyses the reaction (R)-4'-phosphopantetheine + ATP + H(+) = 3'-dephospho-CoA + diphosphate. Its pathway is cofactor biosynthesis; coenzyme A biosynthesis; CoA from (R)-pantothenate: step 4/5. Functionally, reversibly transfers an adenylyl group from ATP to 4'-phosphopantetheine, yielding dephospho-CoA (dPCoA) and pyrophosphate. This Lacticaseibacillus casei (strain BL23) (Lactobacillus casei) protein is Phosphopantetheine adenylyltransferase.